The chain runs to 397 residues: Elongation factor Tu 1 (397 aa).

The 197-residue stretch at K10–V206 folds into the tr-type G domain. The interval G19–T26 is G1. G19 to T26 contributes to the GTP binding site. T26 lines the Mg(2+) pocket. Positions G61–S65 are G2. The G3 stretch occupies residues D82–G85. GTP-binding positions include D82–H86 and N137–D140. Residues N137–D140 are G4. A G5 region spans residues S175–L177.

This sequence belongs to the TRAFAC class translation factor GTPase superfamily. Classic translation factor GTPase family. EF-Tu/EF-1A subfamily. In terms of assembly, monomer.

Its subcellular location is the cytoplasm. The catalysed reaction is GTP + H2O = GDP + phosphate + H(+). GTP hydrolase that promotes the GTP-dependent binding of aminoacyl-tRNA to the A-site of ribosomes during protein biosynthesis. The polypeptide is Elongation factor Tu 1 (Alkaliphilus metalliredigens (strain QYMF)).